The sequence spans 1488 residues: Chromosome partition protein MukB (1488 aa).

An ATP-binding site is contributed by 34 to 41 (GGNGAGKS). Coiled coils occupy residues 326-418 (LEAD…QYNQ), 444-472 (LDTF…QTAH), and 509-602 (RHLA…QRAP). A flexible hinge region spans residues 666–783 (PGGAEDQRLN…SLPIFGRAAR (118 aa)). Coiled coils occupy residues 835-923 (EAEI…AKLE), 977-1116 (EMLS…AKAG), and 1209-1265 (VEAI…LQSV). A disordered region spans residues 1049–1074 (ADSGAEERARQRRDELHAQLSNNRSR). The segment covering 1051–1065 (SGAEERARQRRDELH) has biased composition (basic and acidic residues).

This sequence belongs to the SMC family. MukB subfamily. In terms of assembly, homodimerization via its hinge domain. Binds to DNA via its C-terminal region. Interacts, and probably forms a ternary complex, with MukE and MukF via its C-terminal region. The complex formation is stimulated by calcium or magnesium. Interacts with tubulin-related protein FtsZ.

Its subcellular location is the cytoplasm. The protein resides in the nucleoid. Its function is as follows. Plays a central role in chromosome condensation, segregation and cell cycle progression. Functions as a homodimer, which is essential for chromosome partition. Involved in negative DNA supercoiling in vivo, and by this means organize and compact chromosomes. May achieve or facilitate chromosome segregation by condensation DNA from both sides of a centrally located replisome during cell division. This chain is Chromosome partition protein MukB, found in Salmonella typhi.